Consider the following 198-residue polypeptide: Superoxide dismutase [Fe] (198 aa).

Fe cation contacts are provided by histidine 27, histidine 74, aspartate 158, and histidine 162.

It belongs to the iron/manganese superoxide dismutase family. Homodimer. Requires Fe cation as cofactor.

Its subcellular location is the cytoplasm. The catalysed reaction is 2 superoxide + 2 H(+) = H2O2 + O2. Its function is as follows. Destroys superoxide anion radicals which are normally produced within the cells and which are toxic to biological systems. This chain is Superoxide dismutase [Fe] (SODB), found in Plasmodium falciparum (isolate 3D7).